The chain runs to 521 residues: Colicin-E1* (521 aa).

Disordered stretches follow at residues 26–52 (NGNPDGSGSGGGGGTGGSKSESSAAIH) and 127–163 (SGCALQKQKKKPVKKRKRAEKSFQEAEQRRKEIEKEQ). The segment covering 30-42 (DGSGSGGGGGTGG) has biased composition (gly residues). Residues 133–145 (KQKKKPVKKRKRA) show a composition bias toward basic residues. Residues 146 to 163 (EKSFQEAEQRRKEIEKEQ) are compositionally biased toward basic and acidic residues. 2 helical membrane-spanning segments follow: residues 470–486 (AVDAGVSYVVVLLFSVL) and 493–509 (IWGIAIVTGILCAFIDK).

Belongs to the channel forming colicin family.

Its subcellular location is the cell membrane. In terms of biological role, this colicin is a channel-forming colicin. This class of transmembrane toxins depolarize the cytoplasmic membrane, leading to dissipation of cellular energy. Functionally, colicins are polypeptide toxins produced by and active against E.coli and closely related bacteria. The chain is Colicin-E1* (cea) from Shigella sonnei.